Reading from the N-terminus, the 358-residue chain is DNA polymerase IV (358 aa).

The 182-residue stretch at 4–185 folds into the UmuC domain; that stretch reads IIHVDMDCFY…LPLIKIPGVG (182 aa). Mg(2+) contacts are provided by D8 and D103. Residue E104 is part of the active site.

Belongs to the DNA polymerase type-Y family. In terms of assembly, monomer. Mg(2+) serves as cofactor.

The protein resides in the cytoplasm. It carries out the reaction DNA(n) + a 2'-deoxyribonucleoside 5'-triphosphate = DNA(n+1) + diphosphate. Its function is as follows. Poorly processive, error-prone DNA polymerase involved in untargeted mutagenesis. Copies undamaged DNA at stalled replication forks, which arise in vivo from mismatched or misaligned primer ends. These misaligned primers can be extended by PolIV. Exhibits no 3'-5' exonuclease (proofreading) activity. May be involved in translesional synthesis, in conjunction with the beta clamp from PolIII. This chain is DNA polymerase IV, found in Shewanella pealeana (strain ATCC 700345 / ANG-SQ1).